The chain runs to 94 residues: Ribonuclease P protein component 1 (94 aa).

Belongs to the eukaryotic/archaeal RNase P protein component 1 family. In terms of assembly, consists of a catalytic RNA component and at least 4-5 protein subunits.

The protein resides in the cytoplasm. It carries out the reaction Endonucleolytic cleavage of RNA, removing 5'-extranucleotides from tRNA precursor.. Part of ribonuclease P, a protein complex that generates mature tRNA molecules by cleaving their 5'-ends. The sequence is that of Ribonuclease P protein component 1 from Thermofilum pendens (strain DSM 2475 / Hrk 5).